Reading from the N-terminus, the 586-residue chain is Malonate--CoA ligase ACSF3, mitochondrial (586 aa).

The N-terminal 89 residues, 1 to 89 (MPLPYVGMAL…SREICQLRAC (89 aa)), are a transit peptide targeting the mitochondrion. ATP-binding positions include 203–211 (TSGTTGRPK), Asp457, Arg471, and Lys563.

It belongs to the ATP-dependent AMP-binding enzyme family.

The protein resides in the mitochondrion. The catalysed reaction is tetracosanoate + ATP + CoA = tetracosanoyl-CoA + AMP + diphosphate. It carries out the reaction malonate + ATP + CoA = malonyl-CoA + AMP + diphosphate. Its function is as follows. Catalyzes the initial reaction in intramitochondrial fatty acid synthesis, by activating malonate and methylmalonate, but not acetate, into their respective CoA thioester. May have some preference toward very-long-chain substrates. The chain is Malonate--CoA ligase ACSF3, mitochondrial from Bos taurus (Bovine).